Consider the following 348-residue polypeptide: Macrophage-capping protein (348 aa).

M1 carries the post-translational modification N-acetylmethionine. One copy of the Gelsolin-like 1 repeat lies at 27-75; that stretch reads EKLKPVPVAQENQGVFFSGDSYLVLHNGPEEVSHLHLWIGQQSSRDEQG. The Nuclear localization signal signature appears at 137–146; that stretch reads KKLYQVKGKK. Gelsolin-like repeat units lie at residues 148 to 188 and 261 to 307; these read IRAT…LERN and MNLT…KERQ. S337 is modified (phosphoserine).

The protein belongs to the villin/gelsolin family. In terms of assembly, interacts with NUP62. Interacts with NUTF2 and RAN; involved in CAPG nuclear import. Post-translationally, the N-terminus is blocked. As to expression, macrophages and macrophage-like cells.

It localises to the nucleus. The protein localises to the cytoplasm. Its subcellular location is the melanosome. The protein resides in the cell projection. It is found in the lamellipodium. It localises to the ruffle. In terms of biological role, calcium-sensitive protein which reversibly blocks the barbed ends of actin filaments but does not sever preformed actin filaments. May play an important role in macrophage function. May play a role in regulating cytoplasmic and/or nuclear structures through potential interactions with actin. May bind DNA. This chain is Macrophage-capping protein (CAPG), found in Homo sapiens (Human).